A 296-amino-acid chain; its full sequence is ATP synthase gamma chain (296 aa).

The protein belongs to the ATPase gamma chain family. F-type ATPases have 2 components, CF(1) - the catalytic core - and CF(0) - the membrane proton channel. CF(1) has five subunits: alpha(3), beta(3), gamma(1), delta(1), epsilon(1). CF(0) has three main subunits: a, b and c.

It localises to the cell inner membrane. Its function is as follows. Produces ATP from ADP in the presence of a proton gradient across the membrane. The gamma chain is believed to be important in regulating ATPase activity and the flow of protons through the CF(0) complex. The polypeptide is ATP synthase gamma chain (Jannaschia sp. (strain CCS1)).